The primary structure comprises 160 residues: Phosphopantetheine adenylyltransferase (160 aa).

Thr10 lines the substrate pocket. ATP is bound by residues 10-11 (TF) and His18. The substrate site is built by Lys42, Leu74, and Arg88. ATP is bound by residues 89-91 (GLR), Glu99, and 124-130 (NSFISST).

Belongs to the bacterial CoaD family. Homohexamer. Requires Mg(2+) as cofactor.

Its subcellular location is the cytoplasm. It carries out the reaction (R)-4'-phosphopantetheine + ATP + H(+) = 3'-dephospho-CoA + diphosphate. Its pathway is cofactor biosynthesis; coenzyme A biosynthesis; CoA from (R)-pantothenate: step 4/5. Its function is as follows. Reversibly transfers an adenylyl group from ATP to 4'-phosphopantetheine, yielding dephospho-CoA (dPCoA) and pyrophosphate. The protein is Phosphopantetheine adenylyltransferase of Aeromonas salmonicida (strain A449).